The sequence spans 88 residues: CRISPR-associated endoribonuclease Cas2 3 (88 aa).

Position 9 (aspartate 9) interacts with Mg(2+).

This sequence belongs to the CRISPR-associated endoribonuclease Cas2 protein family. Homodimer, forms a heterotetramer with a Cas1 homodimer. It depends on Mg(2+) as a cofactor.

Its function is as follows. CRISPR (clustered regularly interspaced short palindromic repeat), is an adaptive immune system that provides protection against mobile genetic elements (viruses, transposable elements and conjugative plasmids). CRISPR clusters contain sequences complementary to antecedent mobile elements and target invading nucleic acids. CRISPR clusters are transcribed and processed into CRISPR RNA (crRNA). Functions as a ssRNA-specific endoribonuclease. Involved in the integration of spacer DNA into the CRISPR cassette. The protein is CRISPR-associated endoribonuclease Cas2 3 of Thermodesulfovibrio yellowstonii (strain ATCC 51303 / DSM 11347 / YP87).